The following is a 317-amino-acid chain: Trem-like transcript 1 protein (317 aa).

The signal sequence occupies residues 1-20 (MDCYLLLLLLLLGLAGQGSA). Residues 21–122 (DSHPEVLQAP…PQTLHRVSLL (102 aa)) enclose the Ig-like V-type domain. The Extracellular segment spans residues 21–175 (DSHPEVLQAP…EFRRRENSIP (155 aa)). Intrachain disulfides connect cysteine 39–cysteine 105 and cysteine 53–cysteine 60. The segment at 147–166 (TGSLLEDPSLDPSASAGPHE) is disordered. Residues 176-196 (LIWGAVLLLALVVVAVVIFAV) form a helical membrane-spanning segment. At 197 to 317 (MARKKGNRLV…PPNSQTPPSK (121 aa)) the chain is on the cytoplasmic side. Residue cysteine 208 is the site of S-palmitoyl cysteine attachment. The tract at residues 212–278 (QSTGVPGMDP…SQPPLPPKVL (67 aa)) is disordered. Positions 261 to 275 (SSEPPAPPSQPPLPP) are enriched in pro residues. The residue at position 283 (serine 283) is a Phosphoserine. The ITIM motif lies at 284 to 289 (VTYATV). Positions 295 to 317 (DKGKIASCEPVQDPPNSQTPPSK) are disordered. Positions 308–317 (PPNSQTPPSK) are enriched in polar residues.

As to quaternary structure, when phosphorylated, interacts with PTPN11. When phosphorylated, interacts with PTPN6. Phosphorylated on tyrosine residues. In terms of tissue distribution, highly expressed in bone marrow leukocytes, splenic megakaryocytes and platelets. Detected in brain, liver and in peritoneal monocytes.

The protein resides in the cell membrane. The protein localises to the cytoplasm. In terms of biological role, cell surface receptor that may play a role in the innate and adaptive immune response. The polypeptide is Trem-like transcript 1 protein (Treml1) (Mus musculus (Mouse)).